A 386-amino-acid chain; its full sequence is Galactokinase (386 aa).

35–38 (EHTD) is a substrate binding site. Residues Ser-69 and 125–131 (GAGLSSS) each bind ATP. Residues Ser-131 and Glu-163 each contribute to the Mg(2+) site. Asp-175 functions as the Proton acceptor in the catalytic mechanism. Residue Tyr-224 coordinates substrate.

The protein belongs to the GHMP kinase family. GalK subfamily.

It localises to the cytoplasm. The enzyme catalyses alpha-D-galactose + ATP = alpha-D-galactose 1-phosphate + ADP + H(+). Its pathway is carbohydrate metabolism; galactose metabolism. Its function is as follows. Catalyzes the transfer of the gamma-phosphate of ATP to D-galactose to form alpha-D-galactose-1-phosphate (Gal-1-P). In Vibrio vulnificus (strain YJ016), this protein is Galactokinase.